Consider the following 610-residue polypeptide: UvrABC system protein C (610 aa).

The 79-residue stretch at 16 to 94 (SQPGVYRMYD…IKLYQPRYNV (79 aa)) folds into the GIY-YIG domain. One can recognise a UVR domain in the interval 204–239 (DQVLTQLIARMEKASQDLAFEEAARIRDQIQAVRRV).

It belongs to the UvrC family. In terms of assembly, interacts with UvrB in an incision complex.

Its subcellular location is the cytoplasm. Its function is as follows. The UvrABC repair system catalyzes the recognition and processing of DNA lesions. UvrC both incises the 5' and 3' sides of the lesion. The N-terminal half is responsible for the 3' incision and the C-terminal half is responsible for the 5' incision. The protein is UvrABC system protein C of Salmonella dublin (strain CT_02021853).